The chain runs to 508 residues: Cobalamin biosynthesis protein CobIJ (508 aa).

Residues 1–243 are precorrin-2 C20-methyltransferase; the sequence is MSARGTLWGV…AMLPGGRRRA (243 aa). The precorrin-3 methylase stretch occupies residues 244–508; the sequence is LLTGTVAVVG…TATKSSRHSD (265 aa). The disordered stretch occupies residues 489-508; the sequence is PRRYPEAGRATATKSSRHSD.

Belongs to the precorrin methyltransferase family.

It catalyses the reaction precorrin-2 + S-adenosyl-L-methionine = precorrin-3A + S-adenosyl-L-homocysteine + H(+). It carries out the reaction precorrin-3B + S-adenosyl-L-methionine = precorrin-4 + S-adenosyl-L-homocysteine + 3 H(+). The protein operates within cofactor biosynthesis; adenosylcobalamin biosynthesis; cob(II)yrinate a,c-diamide from precorrin-2 (aerobic route): step 1/10. It participates in cofactor biosynthesis; adenosylcobalamin biosynthesis; cob(II)yrinate a,c-diamide from precorrin-2 (aerobic route): step 3/10. Functionally, methylates precorrin-2 at the C-20 position to produce precorrin-3A. The protein is Cobalamin biosynthesis protein CobIJ (cobIJ) of Mycobacterium bovis (strain ATCC BAA-935 / AF2122/97).